Consider the following 326-residue polypeptide: Olfactory receptor 10X1 (326 aa).

At 1–41 the chain is on the extracellular side; it reads MVLNVYCCFFQISDIQTMKINQTILKEFILVGFSVYPHVQT. Asparagine 21 carries N-linked (GlcNAc...) asparagine glycosylation. The helical transmembrane segment at 42 to 62 threads the bilayer; that stretch reads FLFVVFFCLYLLTLAGNLIIM. Residues 63-70 are Cytoplasmic-facing; it reads GLTWVDRS. A helical transmembrane segment spans residues 71-91; it reads LHTPMYLFLSALSFSETCYTL. The Extracellular portion of the chain corresponds to 92–115; the sequence is TIVPKMLEDLLAKDRSISVTGCSL. Cysteines 113 and 205 form a disulfide. Residues 116–136 traverse the membrane as a helical segment; it reads QMCFFLGLGGTNCIILTLMGY. The Cytoplasmic portion of the chain corresponds to 137–155; the sequence is DRFLAICNPLRYPLLMTNI. A helical transmembrane segment spans residues 156–176; that stretch reads VCGQLVASACTAGFFISLTET. Residues 177 to 213 are Extracellular-facing; it reads ALIFRDSFCRPNLVKHFFCHMLAVIRLSCIDSNHTEF. Asparagine 209 is a glycosylation site (N-linked (GlcNAc...) asparagine). The chain crosses the membrane as a helical span at residues 214–233; sequence IITLISVSGLLGTLLLIILT. Residues 234-253 are Cytoplasmic-facing; the sequence is DVFIISTVLRIPSAEGKQKA. Residues 254–274 form a helical membrane-spanning segment; it reads FTTCASHLTVVIIHFGFASIV. Over 275-284 the chain is Extracellular; it reads YLKPEASGDD. The chain crosses the membrane as a helical span at residues 285 to 305; that stretch reads TLIAVPYTVITPFLSPIIFSL. The Cytoplasmic portion of the chain corresponds to 306–326; that stretch reads RNKDMKNAFRRMMGNTVALKK.

This sequence belongs to the G-protein coupled receptor 1 family.

It localises to the cell membrane. Functionally, odorant receptor. This chain is Olfactory receptor 10X1 (OR10X1), found in Homo sapiens (Human).